The chain runs to 569 residues: Adenine deaminase 1 (569 aa).

This sequence belongs to the metallo-dependent hydrolases superfamily. Adenine deaminase family. Requires Mn(2+) as cofactor.

It catalyses the reaction adenine + H2O + H(+) = hypoxanthine + NH4(+). This chain is Adenine deaminase 1, found in Rhizobium johnstonii (strain DSM 114642 / LMG 32736 / 3841) (Rhizobium leguminosarum bv. viciae).